The following is a 229-amino-acid chain: Prolactin (229 aa).

Positions 1–30 (MDSKGSSQKGSRLLLLLVVSNLLLCQGVVS) are cleaved as a signal peptide. An intrachain disulfide couples Cys-34 to Cys-41. Phosphoserine occurs at positions 56, 64, and 120. Intrachain disulfides connect Cys-88–Cys-204 and Cys-221–Cys-229.

This sequence belongs to the somatotropin/prolactin family. Interacts with PRLR.

The protein localises to the secreted. Prolactin acts primarily on the mammary gland by promoting lactation. This is Prolactin (PRL) from Bos taurus (Bovine).